Consider the following 492-residue polypeptide: Ketol-acid reductoisomerase (NADP(+)) (492 aa).

A KARI N-terminal Rossmann domain is found at 14–208; that stretch reads LDQLGRCRFM…GGHKAGVLES (195 aa). Residues 45–48, Arg68, Arg76, Ser78, and 108–110 contribute to the NADP(+) site; these read CGAQ and DKQ. Residue His132 is part of the active site. Residue Gly158 participates in NADP(+) binding. 2 KARI C-terminal knotted domains span residues 209–344 and 345–485; these read SFVA…NAPK and YDGK…MTDM. Residues Asp217, Glu221, Glu389, and Glu393 each contribute to the Mg(2+) site. Ser414 contributes to the substrate binding site.

It belongs to the ketol-acid reductoisomerase family. Mg(2+) serves as cofactor.

It catalyses the reaction (2R)-2,3-dihydroxy-3-methylbutanoate + NADP(+) = (2S)-2-acetolactate + NADPH + H(+). The catalysed reaction is (2R,3R)-2,3-dihydroxy-3-methylpentanoate + NADP(+) = (S)-2-ethyl-2-hydroxy-3-oxobutanoate + NADPH + H(+). It participates in amino-acid biosynthesis; L-isoleucine biosynthesis; L-isoleucine from 2-oxobutanoate: step 2/4. It functions in the pathway amino-acid biosynthesis; L-valine biosynthesis; L-valine from pyruvate: step 2/4. Involved in the biosynthesis of branched-chain amino acids (BCAA). Catalyzes an alkyl-migration followed by a ketol-acid reduction of (S)-2-acetolactate (S2AL) to yield (R)-2,3-dihydroxy-isovalerate. In the isomerase reaction, S2AL is rearranged via a Mg-dependent methyl migration to produce 3-hydroxy-3-methyl-2-ketobutyrate (HMKB). In the reductase reaction, this 2-ketoacid undergoes a metal-dependent reduction by NADPH to yield (R)-2,3-dihydroxy-isovalerate. This Haemophilus influenzae (strain PittGG) protein is Ketol-acid reductoisomerase (NADP(+)).